The following is a 258-amino-acid chain: NAD kinase (258 aa).

Catalysis depends on Asp51, which acts as the Proton acceptor. NAD(+)-binding positions include Asp51 to Gly52, Arg56, Asn119 to Asp120, Lys130, Asp149, Thr160 to Ser165, and Ala184.

The protein belongs to the NAD kinase family. A divalent metal cation is required as a cofactor.

It is found in the cytoplasm. The catalysed reaction is NAD(+) + ATP = ADP + NADP(+) + H(+). Functionally, involved in the regulation of the intracellular balance of NAD and NADP, and is a key enzyme in the biosynthesis of NADP. Catalyzes specifically the phosphorylation on 2'-hydroxyl of the adenosine moiety of NAD to yield NADP. The protein is NAD kinase of Thermotoga neapolitana (strain ATCC 49049 / DSM 4359 / NBRC 107923 / NS-E).